The primary structure comprises 176 residues: uncharacterized protein (176 aa).

Belongs to the mimivirus R160 family.

This is an uncharacterized protein from Acanthamoeba polyphaga mimivirus (APMV).